Here is a 390-residue protein sequence, read N- to C-terminus: cAMP-dependent protein kinase regulatory subunit (390 aa).

The segment covering 1–17 has biased composition (polar residues); sequence MSASGFTSPFGANSNPF. Residues 1 to 81 form a disordered region; sequence MSASGFTSPF…RPQNPDGYPA (81 aa). The tract at residues 1–129 is dimerization and phosphorylation; the sequence is MSASGFTSPF…RLKKAIQGNF (129 aa). Serine 90 carries the phosphoserine modification. 3',5'-cyclic AMP contacts are provided by residues 130 to 261, glutamate 208, arginine 217, 262 to 383, glutamate 329, and arginine 338; these read LFSH…EEVP and ILST…GVEE.

Belongs to the cAMP-dependent kinase regulatory chain family. In terms of assembly, tetramer, composed of 2 regulatory (R) and 2 catalytic (C) subunits. In the presence of cAMP it dissociates into 2 active monomeric C subunits and an R dimer.

The chain is cAMP-dependent protein kinase regulatory subunit (SUM1) from Pyricularia oryzae (strain 70-15 / ATCC MYA-4617 / FGSC 8958) (Rice blast fungus).